A 473-amino-acid polypeptide reads, in one-letter code: ATP synthase subunit beta (473 aa).

158–165 (GGAGVGKT) is an ATP binding site.

The protein belongs to the ATPase alpha/beta chains family. In terms of assembly, F-type ATPases have 2 components, CF(1) - the catalytic core - and CF(0) - the membrane proton channel. CF(1) has five subunits: alpha(3), beta(3), gamma(1), delta(1), epsilon(1). CF(0) has three main subunits: a(1), b(2) and c(9-12). The alpha and beta chains form an alternating ring which encloses part of the gamma chain. CF(1) is attached to CF(0) by a central stalk formed by the gamma and epsilon chains, while a peripheral stalk is formed by the delta and b chains.

The protein resides in the cell membrane. The catalysed reaction is ATP + H2O + 4 H(+)(in) = ADP + phosphate + 5 H(+)(out). Functionally, produces ATP from ADP in the presence of a proton gradient across the membrane. The catalytic sites are hosted primarily by the beta subunits. The protein is ATP synthase subunit beta of Bacillus caldotenax.